Reading from the N-terminus, the 274-residue chain is CTO1 family protein C17G9.12c (274 aa).

The protein belongs to the CTO1 family.

Its subcellular location is the cytoplasm. It localises to the nucleus. The polypeptide is CTO1 family protein C17G9.12c (Schizosaccharomyces pombe (strain 972 / ATCC 24843) (Fission yeast)).